Reading from the N-terminus, the 89-residue chain is Putative membrane protein insertion efficiency factor (89 aa).

The interval 68–89 (VPPPNSDARNAPHEAEASSHRL) is disordered. Residues 77-89 (NAPHEAEASSHRL) show a composition bias toward basic and acidic residues.

This sequence belongs to the UPF0161 family.

It is found in the cell inner membrane. Its function is as follows. Could be involved in insertion of integral membrane proteins into the membrane. In Burkholderia mallei (strain SAVP1), this protein is Putative membrane protein insertion efficiency factor.